Consider the following 404-residue polypeptide: MLKYEYILVRYGEMTTKGKNRSKFVSTLKDNVKFKLKKFPNIKIDATHDRMYIQLNGEDHEAVSERLKDVFGIHKFNLAMKVPSELEDIKEGALAAFLQVKGDVKTFKITVHRSYKHFPMRTMELLPEIGGHILENTEDITVDVHNPDVNVRVEIRSGYSYIMCDERMGAGGLPVGVGGKVMVLLSGGIDSPVAAYLTMKRGVSVEAVHFHSPPFTSERAKQKVIDLAQELTKYCKRVTLHLVPFTEVQKTINKEIPSSYSMTVMRRMMMRITERIAEERNALAITTGESLGQVASQTLDSMHTINEVTNYPVIRPLITMDKLEIIKIAEEIGTYDISIRPYEDCCTVFTPASPATKPKREKANRFEAKYDFTPLIDEAVANKETMVLQTVEVVAEEEKFEELF.

Residues 61 to 166 enclose the THUMP domain; it reads EAVSERLKDV…SGYSYIMCDE (106 aa). ATP-binding positions include 184–185, 209–210, arginine 266, glycine 288, and glutamine 297; these read LL and HF.

The protein belongs to the ThiI family.

Its subcellular location is the cytoplasm. It carries out the reaction [ThiI sulfur-carrier protein]-S-sulfanyl-L-cysteine + a uridine in tRNA + 2 reduced [2Fe-2S]-[ferredoxin] + ATP + H(+) = [ThiI sulfur-carrier protein]-L-cysteine + a 4-thiouridine in tRNA + 2 oxidized [2Fe-2S]-[ferredoxin] + AMP + diphosphate. The enzyme catalyses [ThiS sulfur-carrier protein]-C-terminal Gly-Gly-AMP + S-sulfanyl-L-cysteinyl-[cysteine desulfurase] + AH2 = [ThiS sulfur-carrier protein]-C-terminal-Gly-aminoethanethioate + L-cysteinyl-[cysteine desulfurase] + A + AMP + 2 H(+). It participates in cofactor biosynthesis; thiamine diphosphate biosynthesis. In terms of biological role, catalyzes the ATP-dependent transfer of a sulfur to tRNA to produce 4-thiouridine in position 8 of tRNAs, which functions as a near-UV photosensor. Also catalyzes the transfer of sulfur to the sulfur carrier protein ThiS, forming ThiS-thiocarboxylate. This is a step in the synthesis of thiazole, in the thiamine biosynthesis pathway. The sulfur is donated as persulfide by IscS. This chain is Probable tRNA sulfurtransferase, found in Bacillus cereus (strain B4264).